The following is a 528-amino-acid chain: Phosphoenolpyruvate carboxykinase (ATP) (528 aa).

Arg-56, Tyr-192, and Lys-198 together coordinate substrate. Residues Lys-198, His-217, and 233–241 (GLSGTGKTT) each bind ATP. Mn(2+) is bound by residues Lys-198 and His-217. Asp-254 lines the Mn(2+) pocket. Residues Glu-282, Arg-319, and Thr-444 each contribute to the ATP site. Position 319 (Arg-319) interacts with substrate.

This sequence belongs to the phosphoenolpyruvate carboxykinase (ATP) family. Mn(2+) is required as a cofactor.

The protein localises to the cytoplasm. It carries out the reaction oxaloacetate + ATP = phosphoenolpyruvate + ADP + CO2. Its pathway is carbohydrate biosynthesis; gluconeogenesis. In terms of biological role, involved in the gluconeogenesis. Catalyzes the conversion of oxaloacetate (OAA) to phosphoenolpyruvate (PEP) through direct phosphoryl transfer between the nucleoside triphosphate and OAA. This chain is Phosphoenolpyruvate carboxykinase (ATP), found in Bacillus mycoides (strain KBAB4) (Bacillus weihenstephanensis).